The following is a 601-amino-acid chain: MPRQEHIRNFSIIAHIDHGKSTLADRILEVTGLVSDREKRDQYLDRMELERERGITIKAQSVRIPYTAKDGRKYVLNLIDTPGHVDFNYEVSRSLAACEGALLVVDASQGVEAQTLANVYLALDHNLEVIPVLNKVDLPSADADRVKHEIEESIGLDCSDAVAVSAKTGLNVDKVLEAIVERLPAPEGNLNAPLKALIFDSWYDSYQGVVVLFRIVDGVLRKGDRIKLFATERSYEVIRLGVFSPEIVDMTELGAGEVGFLCANIKELGDAKVGDTITHVDRPAEVPVEGFKEVQPMVFCGLYPTDSADYEQLKYALEKLQLNDAAFSYEPETSQALGFGYRCGFLGLLHMEIIQERLEREFQVELIATAPSVIYKIDTVDGKKSDIDNPSKLPDPTKIAALYEPYVRMDIHVPNDYVGNVLKLCEEKRGIQKNMGYIASNRVVITYELPFAEIVFDFFDRLKSGTKGYASMDYEFIDYRQSALVKLDILINGEAVDALAVIVHRDKAYHYGRALALKLKRTIPRQMFEVAIQAAIGQKIIARESISALRKNVTAKCYGGDITRKRKLLEKQKEGKKRMKRMGNVELPQEAFLAALQVGDE.

In terms of domain architecture, tr-type G spans 5–187 (EHIRNFSIIA…AIVERLPAPE (183 aa)). Residues 17–22 (DHGKST) and 134–137 (NKVD) each bind GTP.

Belongs to the TRAFAC class translation factor GTPase superfamily. Classic translation factor GTPase family. LepA subfamily.

Its subcellular location is the cell inner membrane. It catalyses the reaction GTP + H2O = GDP + phosphate + H(+). Its function is as follows. Required for accurate and efficient protein synthesis under certain stress conditions. May act as a fidelity factor of the translation reaction, by catalyzing a one-codon backward translocation of tRNAs on improperly translocated ribosomes. Back-translocation proceeds from a post-translocation (POST) complex to a pre-translocation (PRE) complex, thus giving elongation factor G a second chance to translocate the tRNAs correctly. Binds to ribosomes in a GTP-dependent manner. In Nitratidesulfovibrio vulgaris (strain DSM 19637 / Miyazaki F) (Desulfovibrio vulgaris), this protein is Elongation factor 4.